We begin with the raw amino-acid sequence, 215 residues long: Adenylate kinase (215 aa).

10-15 is an ATP binding site; the sequence is GAGKGT. Residues 30 to 59 are NMP; sequence STGDMFRAAMKNETEMGKLAKSFIDKGELV. AMP contacts are provided by residues threonine 31, arginine 36, 57 to 59, 86 to 89, and glutamine 93; these read ELV and GYPR. The segment at 127–165 is LID; that stretch reads GRYICRNCGATYHKIFNPTKVEGVCDVCGSHDLYQRADD. Arginine 128 contacts ATP. Cysteine 131 and cysteine 134 together coordinate Zn(2+). Residue 137–138 coordinates ATP; the sequence is TY. Zn(2+) is bound by residues cysteine 151 and cysteine 154. The AMP site is built by arginine 162 and arginine 173. ATP is bound at residue glutamine 201.

Belongs to the adenylate kinase family. Monomer.

It localises to the cytoplasm. It catalyses the reaction AMP + ATP = 2 ADP. It participates in purine metabolism; AMP biosynthesis via salvage pathway; AMP from ADP: step 1/1. Catalyzes the reversible transfer of the terminal phosphate group between ATP and AMP. Plays an important role in cellular energy homeostasis and in adenine nucleotide metabolism. The sequence is that of Adenylate kinase from Lactococcus lactis subsp. lactis (strain IL1403) (Streptococcus lactis).